The following is a 139-amino-acid chain: Transcription antitermination protein NusB (139 aa).

This sequence belongs to the NusB family.

Involved in transcription antitermination. Required for transcription of ribosomal RNA (rRNA) genes. Binds specifically to the boxA antiterminator sequence of the ribosomal RNA (rrn) operons. In Sodalis glossinidius (strain morsitans), this protein is Transcription antitermination protein NusB.